Here is a 185-residue protein sequence, read N- to C-terminus: CASP-like protein 5A1 (185 aa).

The Cytoplasmic portion of the chain corresponds to 1-48 (MNVSHPAVHPVGVPPALGGQAVPPRMRMRVRMEYLVFQGMPLPGSLGG). The chain crosses the membrane as a helical span at residues 49 to 69 (LMLRLGQFCSALIAFSVMVSI). Over 70 to 76 (RDFSVTA) the chain is Extracellular. A helical membrane pass occupies residues 77–97 (FCYLLAATVLQCLWSLALAVI). Residues 98 to 121 (DVYALLVKRSLRNPLLVSIFVVGD) lie on the Cytoplasmic side of the membrane. A helical transmembrane segment spans residues 122–142 (GVTATLTFAAACASAGVVVLI). Residues 143–160 (GNDISMCKSNPCANYEAA) are Extracellular-facing. A helical transmembrane segment spans residues 161 to 181 (IIMAFLSWFMVSISFVLTFWM). Residues 182 to 185 (LATL) are Cytoplasmic-facing.

Belongs to the Casparian strip membrane proteins (CASP) family. Homodimer and heterodimers.

The protein localises to the cell membrane. This Pinus contorta (Shore pine) protein is CASP-like protein 5A1.